The sequence spans 482 residues: UDP-glucose 6-dehydrogenase 2 (482 aa).

NAD(+) is bound by residues 8-13, Asp33, Arg38, 86-90, 127-128, and Glu163; these read GAGYVG, VNTPT, and ST. Residues 159-163, 218-225, and 258-271 contribute to the substrate site; these read EFLAE, KLAANAFL, and RIGP…VGFG. Cys274 functions as the Nucleophile in the catalytic mechanism. Residue 274–277 participates in NAD(+) binding; that stretch reads CFQK. 336 to 337 lines the substrate pocket; that stretch reads FK. Residue Arg344 participates in NAD(+) binding. Ser395 bears the Phosphoserine mark. Arg449 provides a ligand contact to substrate.

The protein belongs to the UDP-glucose/GDP-mannose dehydrogenase family.

The enzyme catalyses UDP-alpha-D-glucose + 2 NAD(+) + H2O = UDP-alpha-D-glucuronate + 2 NADH + 3 H(+). It functions in the pathway nucleotide-sugar biosynthesis; UDP-alpha-D-glucuronate biosynthesis; UDP-alpha-D-glucuronate from UDP-alpha-D-glucose: step 1/1. In terms of biological role, involved in the biosynthesis of UDP-glucuronic acid (UDP-GlcA), providing nucleotide sugars for cell-wall polymers. The protein is UDP-glucose 6-dehydrogenase 2 (UGD2) of Oryza sativa subsp. japonica (Rice).